The primary structure comprises 253 residues: TasA anchoring/assembly protein (253 aa).

The N-terminal stretch at 1–32 (MFRLFHNQQKAKTKLKVLLIFQLSVIFSLTAA) is a signal peptide. Residues 50–57 (TFDVSLQT) are important for TasA fiber formation. Residues 190–241 (EKPTVPKKETKSDVKKENETTQKDIPEKTMKEETSQEAVTKEKETQSDQKES) show a composition bias toward basic and acidic residues. Residues 190–253 (EKPTVPKKET…EDEKSNEADQ (64 aa)) are disordered.

Its subcellular location is the secreted. It localises to the cell wall. Required for biofilm formation. Required for the proper anchoring and polymerization of TasA amyloid fibers at the cell surface. Is also a minor component of TasA fibers. In Bacillus subtilis (strain 168), this protein is TasA anchoring/assembly protein.